The chain runs to 328 residues: Ketol-acid reductoisomerase (NADP(+)) (328 aa).

The KARI N-terminal Rossmann domain maps to 2–182 (AKIYRDGDAS…GATRAGVIET (181 aa)). NADP(+) contacts are provided by residues 25–28 (YGIQ), Arg48, Ser53, and 83–86 (DMEQ). The active site involves His108. NADP(+) is bound at residue Gly134. Residues 183–328 (TFAEETETDL…AEMRKLLFGP (146 aa)) enclose the KARI C-terminal knotted domain. 4 residues coordinate Mg(2+): Asp191, Glu195, Glu227, and Glu231. Ser252 lines the substrate pocket.

Belongs to the ketol-acid reductoisomerase family. Requires Mg(2+) as cofactor.

It carries out the reaction (2R)-2,3-dihydroxy-3-methylbutanoate + NADP(+) = (2S)-2-acetolactate + NADPH + H(+). It catalyses the reaction (2R,3R)-2,3-dihydroxy-3-methylpentanoate + NADP(+) = (S)-2-ethyl-2-hydroxy-3-oxobutanoate + NADPH + H(+). Its pathway is amino-acid biosynthesis; L-isoleucine biosynthesis; L-isoleucine from 2-oxobutanoate: step 2/4. It functions in the pathway amino-acid biosynthesis; L-valine biosynthesis; L-valine from pyruvate: step 2/4. Functionally, involved in the biosynthesis of branched-chain amino acids (BCAA). Catalyzes an alkyl-migration followed by a ketol-acid reduction of (S)-2-acetolactate (S2AL) to yield (R)-2,3-dihydroxy-isovalerate. In the isomerase reaction, S2AL is rearranged via a Mg-dependent methyl migration to produce 3-hydroxy-3-methyl-2-ketobutyrate (HMKB). In the reductase reaction, this 2-ketoacid undergoes a metal-dependent reduction by NADPH to yield (R)-2,3-dihydroxy-isovalerate. The polypeptide is Ketol-acid reductoisomerase (NADP(+)) (Pyrobaculum calidifontis (strain DSM 21063 / JCM 11548 / VA1)).